A 124-amino-acid polypeptide reads, in one-letter code: Small ribosomal subunit protein uS12 (124 aa).

Position 89 is a 3-methylthioaspartic acid (Asp89). The interval 104–124 (ALGVEDRKRGRSKYGAKRPKA) is disordered. Positions 112–124 (RGRSKYGAKRPKA) are enriched in basic residues.

Belongs to the universal ribosomal protein uS12 family. In terms of assembly, part of the 30S ribosomal subunit. Contacts proteins S8 and S17. May interact with IF1 in the 30S initiation complex.

Functionally, with S4 and S5 plays an important role in translational accuracy. Interacts with and stabilizes bases of the 16S rRNA that are involved in tRNA selection in the A site and with the mRNA backbone. Located at the interface of the 30S and 50S subunits, it traverses the body of the 30S subunit contacting proteins on the other side and probably holding the rRNA structure together. The combined cluster of proteins S8, S12 and S17 appears to hold together the shoulder and platform of the 30S subunit. The chain is Small ribosomal subunit protein uS12 from Treponema denticola (strain ATCC 35405 / DSM 14222 / CIP 103919 / JCM 8153 / KCTC 15104).